The chain runs to 290 residues: 33 kDa chaperonin (290 aa).

Cystine bridges form between C235–C237 and C268–C271.

The protein belongs to the HSP33 family. Post-translationally, under oxidizing conditions two disulfide bonds are formed involving the reactive cysteines. Under reducing conditions zinc is bound to the reactive cysteines and the protein is inactive.

The protein resides in the cytoplasm. Its function is as follows. Redox regulated molecular chaperone. Protects both thermally unfolding and oxidatively damaged proteins from irreversible aggregation. Plays an important role in the bacterial defense system toward oxidative stress. This Streptococcus gordonii (strain Challis / ATCC 35105 / BCRC 15272 / CH1 / DL1 / V288) protein is 33 kDa chaperonin.